The sequence spans 277 residues: Diaminopimelate epimerase (277 aa).

2 residues coordinate substrate: Asn15 and Asn74. Cys83 (proton donor) is an active-site residue. Residues 84 to 85 (GN), Asn159, Asn194, and 212 to 213 (ER) contribute to the substrate site. Catalysis depends on Cys221, which acts as the Proton acceptor. 222–223 (GT) lines the substrate pocket.

This sequence belongs to the diaminopimelate epimerase family. Homodimer.

Its subcellular location is the cytoplasm. The catalysed reaction is (2S,6S)-2,6-diaminopimelate = meso-2,6-diaminopimelate. Its pathway is amino-acid biosynthesis; L-lysine biosynthesis via DAP pathway; DL-2,6-diaminopimelate from LL-2,6-diaminopimelate: step 1/1. Catalyzes the stereoinversion of LL-2,6-diaminopimelate (L,L-DAP) to meso-diaminopimelate (meso-DAP), a precursor of L-lysine and an essential component of the bacterial peptidoglycan. The sequence is that of Diaminopimelate epimerase from Corynebacterium glutamicum (strain R).